We begin with the raw amino-acid sequence, 256 residues long: MALAKRIIPCLDVDNGRVVKGVKFENIRDAGDPVEIARRYDEQGADEITFLDITASVDGRDTTLHTVERMASQVFIPLTVGGGVRTVQDIRNLLNAGADKVSINTAAVFNPEFVGEAAARFGSQCIVVAIDAKKVSGPGETPRWEIFTHGGRKPTGLDAVLWAKKMEDLGAGEILLTSMDQDGMKNGFDLGVTRAISDALGIPVIASGGVGNLEHLAAGVIEGHASAVLAASIFHFGEYTVPEAKAYMASRGIVVR.

Residues aspartate 12 and aspartate 131 contribute to the active site.

Belongs to the HisA/HisF family. Heterodimer of HisH and HisF.

It is found in the cytoplasm. The enzyme catalyses 5-[(5-phospho-1-deoxy-D-ribulos-1-ylimino)methylamino]-1-(5-phospho-beta-D-ribosyl)imidazole-4-carboxamide + L-glutamine = D-erythro-1-(imidazol-4-yl)glycerol 3-phosphate + 5-amino-1-(5-phospho-beta-D-ribosyl)imidazole-4-carboxamide + L-glutamate + H(+). The protein operates within amino-acid biosynthesis; L-histidine biosynthesis; L-histidine from 5-phospho-alpha-D-ribose 1-diphosphate: step 5/9. Functionally, IGPS catalyzes the conversion of PRFAR and glutamine to IGP, AICAR and glutamate. The HisF subunit catalyzes the cyclization activity that produces IGP and AICAR from PRFAR using the ammonia provided by the HisH subunit. The protein is Imidazole glycerol phosphate synthase subunit HisF of Pseudomonas syringae pv. syringae (strain B728a).